A 356-amino-acid polypeptide reads, in one-letter code: UDP-N-acetylglucosamine--N-acetylmuramyl-(pentapeptide) pyrophosphoryl-undecaprenol N-acetylglucosamine transferase (356 aa).

UDP-N-acetyl-alpha-D-glucosamine-binding positions include 12–14, Asn124, Arg163, Ser188, Ile242, 261–266, and Gln287; these read TGG and ALTVSE.

This sequence belongs to the glycosyltransferase 28 family. MurG subfamily.

It localises to the cell inner membrane. The enzyme catalyses di-trans,octa-cis-undecaprenyl diphospho-N-acetyl-alpha-D-muramoyl-L-alanyl-D-glutamyl-meso-2,6-diaminopimeloyl-D-alanyl-D-alanine + UDP-N-acetyl-alpha-D-glucosamine = di-trans,octa-cis-undecaprenyl diphospho-[N-acetyl-alpha-D-glucosaminyl-(1-&gt;4)]-N-acetyl-alpha-D-muramoyl-L-alanyl-D-glutamyl-meso-2,6-diaminopimeloyl-D-alanyl-D-alanine + UDP + H(+). It participates in cell wall biogenesis; peptidoglycan biosynthesis. Cell wall formation. Catalyzes the transfer of a GlcNAc subunit on undecaprenyl-pyrophosphoryl-MurNAc-pentapeptide (lipid intermediate I) to form undecaprenyl-pyrophosphoryl-MurNAc-(pentapeptide)GlcNAc (lipid intermediate II). The protein is UDP-N-acetylglucosamine--N-acetylmuramyl-(pentapeptide) pyrophosphoryl-undecaprenol N-acetylglucosamine transferase of Azotobacter vinelandii (strain DJ / ATCC BAA-1303).